The chain runs to 452 residues: Glutamyl-tRNA(Gln) amidotransferase subunit A (452 aa).

Catalysis depends on charge relay system residues lysine 56 and serine 131. The active-site Acyl-ester intermediate is serine 155.

Belongs to the amidase family. GatA subfamily. As to quaternary structure, heterotrimer of A, B and C subunits.

The catalysed reaction is L-glutamyl-tRNA(Gln) + L-glutamine + ATP + H2O = L-glutaminyl-tRNA(Gln) + L-glutamate + ADP + phosphate + H(+). Its function is as follows. Allows the formation of correctly charged Gln-tRNA(Gln) through the transamidation of misacylated Glu-tRNA(Gln) in organisms which lack glutaminyl-tRNA synthetase. The reaction takes place in the presence of glutamine and ATP through an activated gamma-phospho-Glu-tRNA(Gln). This is Glutamyl-tRNA(Gln) amidotransferase subunit A from Campylobacter curvus (strain 525.92).